The sequence spans 165 residues: Acireductone dioxygenase (165 aa).

Residues H90, H92, E96, and H134 each coordinate Fe(2+). Ni(2+)-binding residues include H90, H92, E96, and H134.

Belongs to the acireductone dioxygenase (ARD) family. In terms of assembly, monomer. It depends on Fe(2+) as a cofactor. The cofactor is Ni(2+).

The enzyme catalyses 1,2-dihydroxy-5-(methylsulfanyl)pent-1-en-3-one + O2 = 3-(methylsulfanyl)propanoate + CO + formate + 2 H(+). It carries out the reaction 1,2-dihydroxy-5-(methylsulfanyl)pent-1-en-3-one + O2 = 4-methylsulfanyl-2-oxobutanoate + formate + 2 H(+). It participates in amino-acid biosynthesis; L-methionine biosynthesis via salvage pathway; L-methionine from S-methyl-5-thio-alpha-D-ribose 1-phosphate: step 5/6. Functionally, catalyzes 2 different reactions between oxygen and the acireductone 1,2-dihydroxy-3-keto-5-methylthiopentene (DHK-MTPene) depending upon the metal bound in the active site. Fe-containing acireductone dioxygenase (Fe-ARD) produces formate and 2-keto-4-methylthiobutyrate (KMTB), the alpha-ketoacid precursor of methionine in the methionine recycle pathway. Ni-containing acireductone dioxygenase (Ni-ARD) produces methylthiopropionate, carbon monoxide and formate, and does not lie on the methionine recycle pathway. The polypeptide is Acireductone dioxygenase (Rhodopseudomonas palustris (strain ATCC BAA-98 / CGA009)).